Here is a 45-residue protein sequence, read N- to C-terminus: DNA-directed RNA polymerase subunit Rpo12 (45 aa).

Zn(2+) contacts are provided by Cys8, Cys23, and Cys26.

Belongs to the archaeal Rpo12/eukaryotic RPC10 RNA polymerase subunit family. As to quaternary structure, part of the RNA polymerase complex. It depends on Zn(2+) as a cofactor.

The protein localises to the cytoplasm. It carries out the reaction RNA(n) + a ribonucleoside 5'-triphosphate = RNA(n+1) + diphosphate. DNA-dependent RNA polymerase (RNAP) catalyzes the transcription of DNA into RNA using the four ribonucleoside triphosphates as substrates. The polypeptide is DNA-directed RNA polymerase subunit Rpo12 (Methanosarcina acetivorans (strain ATCC 35395 / DSM 2834 / JCM 12185 / C2A)).